The following is a 108-amino-acid chain: Structural protein 1 (108 aa).

The disordered stretch occupies residues 1-20 (MSRVSEYGVPEGVRESDSDT). Residues 1–77 (MSRVSEYGVP…LKMQMDRLCN (77 aa)) lie on the Intravirion side of the membrane. The chain crosses the membrane as a helical; Signal-anchor for type II membrane protein span at residues 78-98 (VLGVVLQMATLALVTYIAFVV). Over 99-108 (HTRATSCKRE) the chain is Virion surface.

This sequence belongs to the varicellovirus ORF1 protein family. Homodimer. Phosphorylated.

It localises to the virion membrane. The protein resides in the host Golgi apparatus membrane. This is Structural protein 1 from Varicella-zoster virus (strain Dumas) (HHV-3).